Reading from the N-terminus, the 403-residue chain is S-adenosylmethionine synthase (403 aa).

An ATP-binding site is contributed by Gly140 to Asp145.

The protein belongs to the AdoMet synthase 2 family. Mg(2+) serves as cofactor.

The catalysed reaction is L-methionine + ATP + H2O = S-adenosyl-L-methionine + phosphate + diphosphate. The protein operates within amino-acid biosynthesis; S-adenosyl-L-methionine biosynthesis; S-adenosyl-L-methionine from L-methionine: step 1/1. In terms of biological role, catalyzes the formation of S-adenosylmethionine from methionine and ATP. In Sulfolobus acidocaldarius (strain ATCC 33909 / DSM 639 / JCM 8929 / NBRC 15157 / NCIMB 11770), this protein is S-adenosylmethionine synthase.